The sequence spans 199 residues: 5'-deoxynucleotidase HDDC2 (199 aa).

Ala-2 is modified (N-acetylalanine). At Ser-5 the chain carries Phosphoserine. Residues 41-143 (VSDHMYRMAV…VKQLDQCEMI (103 aa)) form the HD domain. A divalent metal cation-binding residues include His-44, His-72, Asp-73, Glu-76, Asp-81, Ile-82, and Asp-138. Ser-199 is subject to Phosphoserine.

This sequence belongs to the HDDC2 family. As to quaternary structure, homodimer. The cofactor is Mn(2+). Co(2+) is required as a cofactor. It depends on Mg(2+) as a cofactor.

It catalyses the reaction a 2'-deoxyribonucleoside 5'-phosphate + H2O = a 2'-deoxyribonucleoside + phosphate. Its function is as follows. Catalyzes the dephosphorylation of the nucleoside 5'-monophosphates deoxyadenosine monophosphate (dAMP), deoxycytidine monophosphate (dCMP), deoxyguanosine monophosphate (dGMP) and deoxythymidine monophosphate (dTMP). In Mus musculus (Mouse), this protein is 5'-deoxynucleotidase HDDC2 (Hddc2).